Here is a 342-residue protein sequence, read N- to C-terminus: 4-hydroxy-2-oxovalerate aldolase (342 aa).

The region spanning 7 to 257 (IWITEVALRD…KTGVDLYKMM (251 aa)) is the Pyruvate carboxyltransferase domain. A substrate-binding site is contributed by 15–16 (RD). A Mn(2+)-binding site is contributed by Asp16. His19 acts as the Proton acceptor in catalysis. Substrate-binding residues include Ser169 and His196. 2 residues coordinate Mn(2+): His196 and His198. Tyr287 contributes to the substrate binding site.

It belongs to the 4-hydroxy-2-oxovalerate aldolase family.

The enzyme catalyses (S)-4-hydroxy-2-oxopentanoate = acetaldehyde + pyruvate. The sequence is that of 4-hydroxy-2-oxovalerate aldolase (nbaI) from Geobacillus thermodenitrificans (strain NG80-2).